A 218-amino-acid polypeptide reads, in one-letter code: MQKATHSITPEGFPVIGLTALAALVFAIIDCWFMAVVFLLLCWFSVHFFRDPERVVPSAPGAGVSPADGRIIKVQPMPDPFTGEPRMCVCIFMNVFNVHVNRFPVSGTVQSIAYHPGKYFNASWDKASTDNERCAYDIVDADGLRWSMVQIAGLIARRIVCRVEEGDTLRRGERCGMIRFGSRVDVYLPEEYEPKVTVGETVFAGQTVLAAKKEQPAE.

Catalysis depends on Ser-182, which acts as the Schiff-base intermediate with substrate; via pyruvic acid. Ser-182 is modified (pyruvic acid (Ser); by autocatalysis).

It belongs to the phosphatidylserine decarboxylase family. PSD-A subfamily. As to quaternary structure, heterodimer of a large membrane-associated beta subunit and a small pyruvoyl-containing alpha subunit. Requires pyruvate as cofactor. Is synthesized initially as an inactive proenzyme. Formation of the active enzyme involves a self-maturation process in which the active site pyruvoyl group is generated from an internal serine residue via an autocatalytic post-translational modification. Two non-identical subunits are generated from the proenzyme in this reaction, and the pyruvate is formed at the N-terminus of the alpha chain, which is derived from the carboxyl end of the proenzyme. The post-translation cleavage follows an unusual pathway, termed non-hydrolytic serinolysis, in which the side chain hydroxyl group of the serine supplies its oxygen atom to form the C-terminus of the beta chain, while the remainder of the serine residue undergoes an oxidative deamination to produce ammonia and the pyruvoyl prosthetic group on the alpha chain.

The protein localises to the cell membrane. The catalysed reaction is a 1,2-diacyl-sn-glycero-3-phospho-L-serine + H(+) = a 1,2-diacyl-sn-glycero-3-phosphoethanolamine + CO2. The protein operates within phospholipid metabolism; phosphatidylethanolamine biosynthesis; phosphatidylethanolamine from CDP-diacylglycerol: step 2/2. Its function is as follows. Catalyzes the formation of phosphatidylethanolamine (PtdEtn) from phosphatidylserine (PtdSer). The polypeptide is Phosphatidylserine decarboxylase proenzyme (Oleidesulfovibrio alaskensis (strain ATCC BAA-1058 / DSM 17464 / G20) (Desulfovibrio alaskensis)).